The chain runs to 431 residues: SPI-1 type 3 secretion system ATPase (431 aa).

162–167 (GCGKTM) provides a ligand contact to ATP.

This sequence belongs to the ATPase alpha/beta chains family. T3SS ATPase subfamily. As to quaternary structure, the core secretion machinery of the T3SS is composed of approximately 20 different proteins, including cytoplasmic components, a base, an export apparatus and a needle. This subunit is part of the cytosolic complex. Forms homohexamers.

The protein resides in the cytoplasm. It catalyses the reaction ATP + H2O + cellular proteinSide 1 = ADP + phosphate + cellular proteinSide 2.. Its function is as follows. ATPase component of the type III secretion system (T3SS), also called injectisome, which is used to inject bacterial effector proteins into eukaryotic host cells. Acts as a molecular motor to provide the energy that is required for the export of proteins. Required for type III secretion apparatus (T3SA) formation, proper protein secretion, host cell invasion and virulence. May play a critical role in T3SS substrate recognition, disassembly of the effector/chaperone complex and unfolding of the effector in an ATP-dependent manner prior to secretion. The protein is SPI-1 type 3 secretion system ATPase of Salmonella typhi.